Consider the following 491-residue polypeptide: Monocarboxylate transport permease protein (491 aa).

Helical transmembrane passes span 7–27, 55–75, 83–103, 130–150, 157–177, 187–207, 246–266, 277–297, 322–342, 374–396, 400–422, 427–447, and 465–485; these read GTAL…GFVA, WFLV…PALV, FFAL…MPVL, LAVA…QLVG, ALGL…ALYT, LIAF…VALI, LALG…GIFA, AIML…GYMG, WFSG…AAVM, ITSL…QFAL, LLGG…TNWF, LLAG…DAGW, and GLLA…LLPA.

The protein belongs to the sodium:solute symporter (SSF) (TC 2.A.21) family.

It localises to the cell membrane. Inhibited by CCCP, but is apparently not affected by the concentration of sodium. Low-affinity transporter of alanine and high-affinity transporter of lactate and pyruvate. Can also transport other monocarboxylates such as propionate, butyrate, alpha-hydroxybutyrate or acetate. May be proton coupled. Required for optimal growth on alanine or pyruvate and ammonia. This Rhizobium johnstonii (strain DSM 114642 / LMG 32736 / 3841) (Rhizobium leguminosarum bv. viciae) protein is Monocarboxylate transport permease protein.